A 1606-amino-acid polypeptide reads, in one-letter code: Pentafunctional AROM polypeptide (1606 aa).

Positions 1-390 (MANADVLKVS…YEPKATVVPD (390 aa)) are 3-dehydroquinate synthase. NAD(+) contacts are provided by residues 45-47 (DTN), 85-88 (ETSK), 116-118 (GGV), and aspartate 121. Arginine 132 provides a ligand contact to 7-phospho-2-dehydro-3-deoxy-D-arabino-heptonate. Position 141–142 (141–142 (TT)) interacts with NAD(+). Residues aspartate 148 and lysine 154 each coordinate 7-phospho-2-dehydro-3-deoxy-D-arabino-heptonate. Lysine 163 is a binding site for NAD(+). A 7-phospho-2-dehydro-3-deoxy-D-arabino-heptonate-binding site is contributed by asparagine 164. Residues 181 to 184 (FLET) and asparagine 192 contribute to the NAD(+) site. Position 196 (glutamate 196) interacts with Zn(2+). 7-phospho-2-dehydro-3-deoxy-D-arabino-heptonate contacts are provided by residues 196–199 (EVVK) and lysine 256. Catalysis depends on glutamate 266, which acts as the Proton acceptor; for 3-dehydroquinate synthase activity. 7-phospho-2-dehydro-3-deoxy-D-arabino-heptonate-binding positions include 270 to 274 (RNLVN) and histidine 277. Histidine 277 is a Zn(2+) binding site. Histidine 281 serves as the catalytic Proton acceptor; for 3-dehydroquinate synthase activity. 7-phospho-2-dehydro-3-deoxy-D-arabino-heptonate is bound by residues histidine 293 and lysine 362. Histidine 293 contributes to the Zn(2+) binding site. Positions 403 to 850 (VIPGVPRHHP…WDDLENKIGL (448 aa)) are EPSP synthase. The active-site For EPSP synthase activity is the cysteine 832. Residues 875–1070 (AASIILIGMR…TSGRRSYFLC (196 aa)) form a shikimate kinase region. 882–889 (GMRGTGKT) contacts ATP. Residues 1071 to 1296 (LTYPDVTQSF…AAPGQLSFKQ (226 aa)) are 3-dehydroquinase. Histidine 1198 acts as the Proton acceptor; for 3-dehydroquinate dehydratase activity in catalysis. Lysine 1226 serves as the catalytic Schiff-base intermediate with substrate; for 3-dehydroquinate dehydratase activity. The tract at residues 1309–1606 (AQRFYLFGTP…QFVFEEECES (298 aa)) is shikimate dehydrogenase.

It in the N-terminal section; belongs to the sugar phosphate cyclases superfamily. Dehydroquinate synthase family. This sequence in the 2nd section; belongs to the EPSP synthase family. In the 3rd section; belongs to the shikimate kinase family. The protein in the 4th section; belongs to the type-I 3-dehydroquinase family. It in the C-terminal section; belongs to the shikimate dehydrogenase family. As to quaternary structure, homodimer. Zn(2+) is required as a cofactor.

The protein localises to the cytoplasm. It catalyses the reaction 7-phospho-2-dehydro-3-deoxy-D-arabino-heptonate = 3-dehydroquinate + phosphate. The enzyme catalyses 3-dehydroquinate = 3-dehydroshikimate + H2O. The catalysed reaction is shikimate + NADP(+) = 3-dehydroshikimate + NADPH + H(+). It carries out the reaction shikimate + ATP = 3-phosphoshikimate + ADP + H(+). It catalyses the reaction 3-phosphoshikimate + phosphoenolpyruvate = 5-O-(1-carboxyvinyl)-3-phosphoshikimate + phosphate. It functions in the pathway metabolic intermediate biosynthesis; chorismate biosynthesis; chorismate from D-erythrose 4-phosphate and phosphoenolpyruvate: step 2/7. Its pathway is metabolic intermediate biosynthesis; chorismate biosynthesis; chorismate from D-erythrose 4-phosphate and phosphoenolpyruvate: step 3/7. It participates in metabolic intermediate biosynthesis; chorismate biosynthesis; chorismate from D-erythrose 4-phosphate and phosphoenolpyruvate: step 4/7. The protein operates within metabolic intermediate biosynthesis; chorismate biosynthesis; chorismate from D-erythrose 4-phosphate and phosphoenolpyruvate: step 5/7. It functions in the pathway metabolic intermediate biosynthesis; chorismate biosynthesis; chorismate from D-erythrose 4-phosphate and phosphoenolpyruvate: step 6/7. Functionally, the AROM polypeptide catalyzes 5 consecutive enzymatic reactions in prechorismate polyaromatic amino acid biosynthesis. This chain is Pentafunctional AROM polypeptide, found in Laccaria bicolor (strain S238N-H82 / ATCC MYA-4686) (Bicoloured deceiver).